The primary structure comprises 293 residues: Glycine betaine-binding protein OpuAC (293 aa).

The signal sequence occupies residues 1-20 (MLKKIIGIGVSAMLALSLAA). The N-palmitoyl cysteine moiety is linked to residue Cys21. Cys21 is lipidated: S-diacylglycerol cysteine.

The complex is composed of two ATP-binding proteins (OpuAA), two transmembrane proteins (OpuAB) and a solute-binding protein (OpuAC). Interacts with FloT.

Its subcellular location is the cell membrane. The protein localises to the membrane raft. In terms of biological role, involved in a multicomponent binding-protein-dependent transport system for glycine betaine. The protein is Glycine betaine-binding protein OpuAC (opuAC) of Bacillus subtilis (strain 168).